The sequence spans 396 residues: Peroxisome proliferator-activated receptor delta (396 aa).

Residues 1–24 (MKEEIPPRSPILDEQPSTPLEHQE) form a disordered region. Over residues 15–24 (QPSTPLEHQE) the composition is skewed to polar residues. The nuclear receptor DNA-binding region spans 28–102 (SVDCKICGDR…LGMSHNAIRF (75 aa)). 2 NR C4-type zinc fingers span residues 31–51 (CKICGDRASGFHYGVHACEGC) and 68–90 (CDRNCKIQKKNRNKCQYCRFNKC). The NR LBD domain maps to 166–394 (FVIHDMDTLW…HPLLQEIYRD (229 aa)).

It belongs to the nuclear hormone receptor family. NR1 subfamily. As to quaternary structure, heterodimer with the retinoid X receptor. In terms of processing, 'Lys-48'-linked polyubiquitinated; leading to proteasomal degradation. Deubiquitinated and stabilized by OTUD3. As to expression, ubiquitous.

The protein resides in the nucleus. Functionally, ligand-activated transcription factor key mediator of energy metabolism in adipose tissues. Receptor that binds peroxisome proliferators such as hypolipidemic drugs and fatty acids. Has a preference for poly-unsaturated fatty acids, such as gamma-linoleic acid and eicosapentanoic acid. Once activated by a ligand, the receptor binds to promoter elements of target genes. Regulates the peroxisomal beta-oxidation pathway of fatty acids. Functions as a transcription activator for the acyl-CoA oxidase gene. Decreases expression of NPC1L1 once activated by a ligand. The chain is Peroxisome proliferator-activated receptor delta (ppard) from Xenopus laevis (African clawed frog).